The chain runs to 159 residues: Large ribosomal subunit protein mL43 (159 aa).

The interval 123-159 (SPSIQGQWHPFTNKPTALGGLRPREVQNPAPTQRPAQ) is disordered.

This sequence belongs to the mitochondrion-specific ribosomal protein mL43 family. Component of the mitochondrial ribosome large subunit (39S) which comprises a 16S rRNA and about 50 distinct proteins.

Its subcellular location is the mitochondrion. In Bos taurus (Bovine), this protein is Large ribosomal subunit protein mL43 (MRPL43).